Consider the following 465-residue polypeptide: Ribulose bisphosphate carboxylase large chain (465 aa).

An N6,N6,N6-trimethyllysine modification is found at K4. N113 and T163 together coordinate substrate. The active-site Proton acceptor is the K165. Position 167 (K167) interacts with substrate. Mg(2+)-binding residues include K191, D193, and E194. K191 carries the N6-carboxylysine modification. The active-site Proton acceptor is H284. Substrate-binding residues include R285, H317, and S369.

The protein belongs to the RuBisCO large chain family. Type I subfamily. As to quaternary structure, heterohexadecamer of 8 large chains and 8 small chains; disulfide-linked. The disulfide link is formed within the large subunit homodimers. Requires Mg(2+) as cofactor. Post-translationally, the disulfide bond which can form in the large chain dimeric partners within the hexadecamer appears to be associated with oxidative stress and protein turnover.

The protein resides in the plastid. The protein localises to the chloroplast. The enzyme catalyses 2 (2R)-3-phosphoglycerate + 2 H(+) = D-ribulose 1,5-bisphosphate + CO2 + H2O. It catalyses the reaction D-ribulose 1,5-bisphosphate + O2 = 2-phosphoglycolate + (2R)-3-phosphoglycerate + 2 H(+). In terms of biological role, ruBisCO catalyzes two reactions: the carboxylation of D-ribulose 1,5-bisphosphate, the primary event in carbon dioxide fixation, as well as the oxidative fragmentation of the pentose substrate in the photorespiration process. Both reactions occur simultaneously and in competition at the same active site. This Ulmus alata (Winged elm) protein is Ribulose bisphosphate carboxylase large chain.